Consider the following 257-residue polypeptide: Acyl-[acyl-carrier-protein]--UDP-N-acetylglucosamine O-acyltransferase (257 aa).

It belongs to the transferase hexapeptide repeat family. LpxA subfamily. In terms of assembly, homotrimer.

The protein resides in the cytoplasm. The enzyme catalyses a (3R)-hydroxyacyl-[ACP] + UDP-N-acetyl-alpha-D-glucosamine = a UDP-3-O-[(3R)-3-hydroxyacyl]-N-acetyl-alpha-D-glucosamine + holo-[ACP]. It functions in the pathway glycolipid biosynthesis; lipid IV(A) biosynthesis; lipid IV(A) from (3R)-3-hydroxytetradecanoyl-[acyl-carrier-protein] and UDP-N-acetyl-alpha-D-glucosamine: step 1/6. Its function is as follows. Involved in the biosynthesis of lipid A, a phosphorylated glycolipid that anchors the lipopolysaccharide to the outer membrane of the cell. This Fusobacterium nucleatum subsp. nucleatum (strain ATCC 25586 / DSM 15643 / BCRC 10681 / CIP 101130 / JCM 8532 / KCTC 2640 / LMG 13131 / VPI 4355) protein is Acyl-[acyl-carrier-protein]--UDP-N-acetylglucosamine O-acyltransferase.